The following is a 492-amino-acid chain: Cytochrome P450 26A1 (492 aa).

C437 lines the heme pocket.

It belongs to the cytochrome P450 family. Heme is required as a cofactor. Expressed primarily in ovary, brain and eyes.

The protein resides in the endoplasmic reticulum membrane. The protein localises to the microsome membrane. The enzyme catalyses all-trans-retinoate + reduced [NADPH--hemoprotein reductase] + O2 = all-trans-(4S)-hydroxyretinoate + oxidized [NADPH--hemoprotein reductase] + H2O + H(+). Its function is as follows. A cytochrome P450 monooxygenase involved in the metabolism of all-trans retinoic acid (atRA), a signaling molecule that binds to retinoic acid receptors and regulates gene transcription. May regulate at-RA signaling during hindbrain development. Mechanistically, uses molecular oxygen inserting one oxygen atom into a substrate, and reducing the second into a water molecule, with two electrons provided by NADPH via cytochrome P450 reductase (CPR; NADPH-ferrihemoprotein reductase). Catalyzes the hydroxylation of carbon hydrogen bonds of atRA primarily at C-4. Has no activity toward 9-cis and 13-cis retinoic acid stereoisomers. May play a role in the oxidative metabolism of xenobiotics such as tazarotenic acid. The chain is Cytochrome P450 26A1 (cyp26a1) from Xenopus laevis (African clawed frog).